Reading from the N-terminus, the 291-residue chain is N-acetylmannosamine kinase (291 aa).

Residues 5–12 (AIDIGGTK) and 132–139 (GVGGGVVS) contribute to the ATP site. The Zn(2+) site is built by His-156, Cys-166, Cys-168, and Cys-173.

Belongs to the ROK (NagC/XylR) family. NanK subfamily. In terms of assembly, homodimer.

The catalysed reaction is an N-acyl-D-mannosamine + ATP = an N-acyl-D-mannosamine 6-phosphate + ADP + H(+). It functions in the pathway amino-sugar metabolism; N-acetylneuraminate degradation; D-fructose 6-phosphate from N-acetylneuraminate: step 2/5. In terms of biological role, catalyzes the phosphorylation of N-acetylmannosamine (ManNAc) to ManNAc-6-P. In Escherichia coli O1:K1 / APEC, this protein is N-acetylmannosamine kinase.